A 183-amino-acid polypeptide reads, in one-letter code: Oligoribonuclease (183 aa).

The region spanning 8-171 (LIWIDLEMTG…DDIRDSIHEL (164 aa)) is the Exonuclease domain. The active site involves Tyr-129.

It belongs to the oligoribonuclease family.

Its subcellular location is the cytoplasm. Functionally, 3'-to-5' exoribonuclease specific for small oligoribonucleotides. The chain is Oligoribonuclease from Halorhodospira halophila (strain DSM 244 / SL1) (Ectothiorhodospira halophila (strain DSM 244 / SL1)).